Here is a 186-residue protein sequence, read N- to C-terminus: GTP-dependent dephospho-CoA kinase (186 aa).

The GTP site is built by Asp43, Ile44, Val45, Asp62, Glu120, and Asp143.

This sequence belongs to the GTP-dependent DPCK family.

It carries out the reaction 3'-dephospho-CoA + GTP = GDP + CoA + H(+). The protein operates within cofactor biosynthesis; coenzyme A biosynthesis. Its function is as follows. Catalyzes the GTP-dependent phosphorylation of the 3'-hydroxyl group of dephosphocoenzyme A to form coenzyme A (CoA). The protein is GTP-dependent dephospho-CoA kinase of Haloquadratum walsbyi (strain DSM 16790 / HBSQ001).